The following is a 149-amino-acid chain: 3-dehydroquinate dehydratase (149 aa).

The active-site Proton acceptor is tyrosine 26. Asparagine 77, histidine 83, and aspartate 90 together coordinate substrate. The active-site Proton donor is histidine 103. Residues 104 to 105 (LS) and arginine 114 contribute to the substrate site.

It belongs to the type-II 3-dehydroquinase family. As to quaternary structure, homododecamer.

It carries out the reaction 3-dehydroquinate = 3-dehydroshikimate + H2O. It participates in metabolic intermediate biosynthesis; chorismate biosynthesis; chorismate from D-erythrose 4-phosphate and phosphoenolpyruvate: step 3/7. In terms of biological role, catalyzes a trans-dehydration via an enolate intermediate. The sequence is that of 3-dehydroquinate dehydratase from Aliivibrio salmonicida (strain LFI1238) (Vibrio salmonicida (strain LFI1238)).